A 357-amino-acid chain; its full sequence is Alanine racemase (357 aa).

Lys-33 functions as the Proton acceptor; specific for D-alanine in the catalytic mechanism. N6-(pyridoxal phosphate)lysine is present on Lys-33. Position 129 (Arg-129) interacts with substrate. Tyr-253 serves as the catalytic Proton acceptor; specific for L-alanine. Met-301 is a substrate binding site.

It belongs to the alanine racemase family. Pyridoxal 5'-phosphate serves as cofactor.

The enzyme catalyses L-alanine = D-alanine. The protein operates within amino-acid biosynthesis; D-alanine biosynthesis; D-alanine from L-alanine: step 1/1. In terms of biological role, catalyzes the interconversion of L-alanine and D-alanine. May also act on other amino acids. The chain is Alanine racemase (alr) from Pseudomonas fluorescens (strain ATCC BAA-477 / NRRL B-23932 / Pf-5).